We begin with the raw amino-acid sequence, 225 residues long: C-reactive protein (225 aa).

Residues 1 to 18 (MLVVFLCLLSVTLEATEG) form the signal peptide. The region spanning 23-225 (SGKVLQFKTA…TGNVLVATDN (203 aa)) is the Pentraxin (PTX) domain. An intrachain disulfide couples C54 to C116. Ca(2+)-binding residues include D78, D157, P158, D159, and Q169.

It belongs to the pentraxin family. Homotrimer. It depends on Ca(2+) as a cofactor.

It is found in the secreted. Displays several functions associated with host defense: it promotes agglutination, bacterial capsular swelling, phagocytosis, and complement fixation through its calcium-dependent binding to phosphorylcholine. This is C-reactive protein from Danio rerio (Zebrafish).